The following is a 497-amino-acid chain: Tripartite motif-containing protein 5 (497 aa).

Alanine 2 is subject to N-acetylalanine. The RING-type zinc-finger motif lies at 15–60; the sequence is CPICLELLTEPLSLPCGHSFCQACITANHRKSMLYKEGERSCPVCR. At serine 87 the chain carries Phosphoserine. The B box-type zinc-finger motif lies at 92 to 133; that stretch reads LKVDHCARHGEKLLLFCQEDSKVICWLCERSQEHRGHHTFLM. Residues cysteine 97, histidine 100, cysteine 119, and histidine 125 each coordinate Zn(2+). Residues 137–225 are a coiled coil; that stretch reads AQEYHVKLQT…LTKSETEMVQ (89 aa). The required for interaction with GABARAP and for autophagy stretch occupies residues 187 to 200; the sequence is FEQLREILDWEESN. Positions 283 to 497 constitute a B30.2/SPRY domain; that stretch reads LKGMLDMFRE…VPMTLCSPSS (215 aa).

It belongs to the TRIM/RBCC family. In terms of assembly, can form homodimers and homotrimers. In addition to lower-order dimerization, also exhibits a higher-order multimerization and both low- and high-order multimerizations are essential for its restriction activity. Interacts with BTBD1 and BTBD2. Interacts with PSMC4, PSMC5, PSMD7 and HSPA8/HSC70. Interacts (via B30.2/SPRY domain) with HSPA1A/B. Interacts with PSMC2, MAP3K7/TAK1, TAB2 and TAB3. Interacts with SQSTM1. Interacts with TRIM6 and TRIM34. Interacts with ULK1 (phosphorylated form), GABARAP, GABARAPL1, GABARAPL2, MAP1LC3A, MAP1LC3C and BECN1. Degraded in a proteasome-independent fashion in the absence of viral infection but in a proteasome-dependent fashion following exposure to restriction sensitive virus. Post-translationally, autoubiquitinated in a RING finger- and UBE2D2-dependent manner. Monoubiquitinated by TRIM21. Deubiquitinated by Yersinia YopJ. Ubiquitination may not lead to proteasomal degradation.

It is found in the cytoplasm. The protein localises to the nucleus. It carries out the reaction S-ubiquitinyl-[E2 ubiquitin-conjugating enzyme]-L-cysteine + [acceptor protein]-L-lysine = [E2 ubiquitin-conjugating enzyme]-L-cysteine + N(6)-ubiquitinyl-[acceptor protein]-L-lysine.. The protein operates within protein modification; protein ubiquitination. Functionally, capsid-specific restriction factor that prevents infection from non-host-adapted retroviruses. Blocks viral replication early in the life cycle, after viral entry but before reverse transcription. In addition to acting as a capsid-specific restriction factor, also acts as a pattern recognition receptor that activates innate immune signaling in response to the retroviral capsid lattice. Binding to the viral capsid triggers its E3 ubiquitin ligase activity, and in concert with the heterodimeric ubiquitin conjugating enzyme complex UBE2V1-UBE2N (also known as UBC13-UEV1A complex) generates 'Lys-63'-linked polyubiquitin chains, which in turn are catalysts in the autophosphorylation of the MAP3K7/TAK1 complex (includes TAK1, TAB2, and TAB3). Activation of the MAP3K7/TAK1 complex by autophosphorylation results in the induction and expression of NF-kappa-B and MAPK-responsive inflammatory genes, thereby leading to an innate immune response in the infected cell. Plays a role in regulating autophagy through activation of autophagy regulator BECN1 by causing its dissociation from its inhibitors BCL2 and TAB2. The sequence is that of Tripartite motif-containing protein 5 (TRIM5) from Papio anubis (Olive baboon).